The following is a 349-amino-acid chain: Protein O-mannose kinase (349 aa).

Residues 1-19 (MGQQHGTRNGLTHRELPRG) lie on the Cytoplasmic side of the membrane. A helical; Signal-anchor for type II membrane protein transmembrane segment spans residues 20–42 (VGLLLAMALMNVALYLCLDQLFI). The Lumenal portion of the chain corresponds to 43-349 (SPGRSTADSR…TVMSQTKEML (307 aa)). Asn66, Asn164, and Asn219 each carry an N-linked (GlcNAc...) asparagine glycan. In terms of domain architecture, Protein kinase spans 80–349 (VRQLKRVGEG…TVMSQTKEML (270 aa)).

The protein belongs to the protein kinase superfamily. Ser/Thr protein kinase family. STKL subfamily.

The protein resides in the endoplasmic reticulum membrane. It carries out the reaction 3-O-[beta-D-GalNAc-(1-&gt;3)-beta-D-GlcNAc-(1-&gt;4)-alpha-D-Man]-L-Thr-[protein] + ATP = 3-O-[beta-D-GalNAc-(1-&gt;3)-beta-D-GlcNAc-(1-&gt;4)-(O-6-P-alpha-D-Man)]-Thr-[protein] + ADP + H(+). Functionally, protein O-mannose kinase that specifically mediates phosphorylation at the 6-position of an O-mannose of the trisaccharide (N-acetylgalactosamine (GalNAc)-beta-1,3-N-acetylglucosamine (GlcNAc)-beta-1,4-mannose) to generate phosphorylated O-mannosyl trisaccharide (N-acetylgalactosamine-beta-1,3-N-acetylglucosamine-beta-1,4-(phosphate-6-)mannose). Phosphorylated O-mannosyl trisaccharide is a carbohydrate structure present in alpha-dystroglycan (DAG1), which is required for binding laminin G-like domain-containing extracellular proteins with high affinity. Only shows kinase activity when the GalNAc-beta-3-GlcNAc-beta-terminus is linked to the 4-position of O-mannose, suggesting that this disaccharide serves as the substrate recognition motif. The sequence is that of Protein O-mannose kinase (Pomk) from Mus musculus (Mouse).